A 254-amino-acid chain; its full sequence is Probable phosphatase TTE1963 (254 aa).

Zn(2+) is bound by residues His-14, His-16, His-22, His-47, Glu-80, His-108, His-139, Asp-200, and His-202.

This sequence belongs to the PHP family. Zn(2+) is required as a cofactor.

This is Probable phosphatase TTE1963 from Caldanaerobacter subterraneus subsp. tengcongensis (strain DSM 15242 / JCM 11007 / NBRC 100824 / MB4) (Thermoanaerobacter tengcongensis).